Consider the following 54-residue polypeptide: uncharacterized protein (54 aa).

An N-terminal signal peptide occupies residues 1-13 (MLLCFHMCQRIMW).

It is found in the secreted. This is an uncharacterized protein from Saccharomyces cerevisiae (strain ATCC 204508 / S288c) (Baker's yeast).